A 172-amino-acid chain; its full sequence is Ribosome maturation factor RimM (172 aa).

The 74-residue stretch at 97–170 (ENEFYFHEII…KITIEVMEGL (74 aa)) folds into the PRC barrel domain.

The protein belongs to the RimM family. As to quaternary structure, binds ribosomal protein uS19.

The protein resides in the cytoplasm. An accessory protein needed during the final step in the assembly of 30S ribosomal subunit, possibly for assembly of the head region. Essential for efficient processing of 16S rRNA. May be needed both before and after RbfA during the maturation of 16S rRNA. It has affinity for free ribosomal 30S subunits but not for 70S ribosomes. The sequence is that of Ribosome maturation factor RimM from Listeria monocytogenes serovar 1/2a (strain ATCC BAA-679 / EGD-e).